The primary structure comprises 277 residues: Large ribosomal subunit protein uL2 (277 aa).

The tract at residues 223–261 (SVMNPNDHPHGGGEGKSPVGRPSPVTPWGKPALGYKTRK) is disordered.

It belongs to the universal ribosomal protein uL2 family. In terms of assembly, part of the 50S ribosomal subunit. Forms a bridge to the 30S subunit in the 70S ribosome.

Its function is as follows. One of the primary rRNA binding proteins. Required for association of the 30S and 50S subunits to form the 70S ribosome, for tRNA binding and peptide bond formation. It has been suggested to have peptidyltransferase activity; this is somewhat controversial. Makes several contacts with the 16S rRNA in the 70S ribosome. In Clostridium botulinum (strain Alaska E43 / Type E3), this protein is Large ribosomal subunit protein uL2.